A 332-amino-acid polypeptide reads, in one-letter code: MATLKDQLIVNLLKEEQAPQNKITVVGVGAVGMACAISILMKDLADELALVDVMEDKLKGEMMDLQHGSLFLKTPKIVSSKDYCVTANSKLVIITAGARQQEGESRLNLVQRNVNIFKFIIPNIVKYSPHCKLLIVSNPVDILTYVAWKISGFPKNRVIGSGCNLDSARFRYLMGERLGVHALSCHGWVLGEHGDSSVPVWSGVNVAGVSLKSLNPELGTDADKEQWKEVHKQVVDSAYEVIKLKGYTSWAIGLSVADLAESIMKNLRRVHPISTMIKGLYGINEDVFLSVPCILGQNGISDVVKVTLTPEEEARLKKSADTLWGIQKELQF.

Alanine 2 carries the post-translational modification N-acetylalanine. Position 5 is an N6-acetyllysine; alternate (lysine 5). Lysine 5 is modified (N6-succinyllysine; alternate). An N6-acetyllysine modification is found at lysine 14. 29–57 (GAVGMACAISILMKDLADELALVDVMEDK) serves as a coordination point for NAD(+). Lysine 57 is subject to N6-acetyllysine; alternate. A Glycyl lysine isopeptide (Lys-Gly) (interchain with G-Cter in SUMO2); alternate cross-link involves residue lysine 57. N6-acetyllysine is present on lysine 81. An NAD(+)-binding site is contributed by arginine 99. A substrate-binding site is contributed by arginine 106. An N6-acetyllysine; alternate modification is found at lysine 118. Lysine 118 carries the N6-succinyllysine; alternate modification. The residue at position 126 (lysine 126) is an N6-acetyllysine. Asparagine 138 contributes to the NAD(+) binding site. Asparagine 138 and arginine 169 together coordinate substrate. The active-site Proton acceptor is histidine 193. N6-acetyllysine occurs at positions 224 and 232. Tyrosine 239 is subject to Phosphotyrosine. Lysine 243 is modified (N6-acetyllysine). Threonine 248 contributes to the substrate binding site. Threonine 309 bears the Phosphothreonine mark. The residue at position 318 (lysine 318) is an N6-acetyllysine; alternate. N6-succinyllysine; alternate is present on lysine 318. Threonine 322 is modified (phosphothreonine).

Belongs to the LDH/MDH superfamily. LDH family. In terms of assembly, homotetramer. Interacts with PTEN upstream reading frame protein MP31. Post-translationally, ISGylated.

Its subcellular location is the cytoplasm. It carries out the reaction (S)-lactate + NAD(+) = pyruvate + NADH + H(+). It participates in fermentation; pyruvate fermentation to lactate; (S)-lactate from pyruvate: step 1/1. Its function is as follows. Interconverts simultaneously and stereospecifically pyruvate and lactate with concomitant interconversion of NADH and NAD(+). In Mus musculus (Mouse), this protein is L-lactate dehydrogenase A chain (Ldha).